A 286-amino-acid polypeptide reads, in one-letter code: 4-diphosphocytidyl-2-C-methyl-D-erythritol kinase (286 aa).

The active site involves Lys-11. 94 to 104 is an ATP binding site; sequence PMGGGIGGGSS. Asp-136 is a catalytic residue.

Belongs to the GHMP kinase family. IspE subfamily.

The catalysed reaction is 4-CDP-2-C-methyl-D-erythritol + ATP = 4-CDP-2-C-methyl-D-erythritol 2-phosphate + ADP + H(+). Its pathway is isoprenoid biosynthesis; isopentenyl diphosphate biosynthesis via DXP pathway; isopentenyl diphosphate from 1-deoxy-D-xylulose 5-phosphate: step 3/6. Its function is as follows. Catalyzes the phosphorylation of the position 2 hydroxy group of 4-diphosphocytidyl-2C-methyl-D-erythritol. The polypeptide is 4-diphosphocytidyl-2-C-methyl-D-erythritol kinase (Pseudomonas putida (strain ATCC 700007 / DSM 6899 / JCM 31910 / BCRC 17059 / LMG 24140 / F1)).